The chain runs to 40 residues: Photosystem II reaction center protein J (40 aa).

A helical transmembrane segment spans residues 8-28 (IPLWLIGTVAGIPVIGLVGVF).

The protein belongs to the PsbJ family. In terms of assembly, PSII is composed of 1 copy each of membrane proteins PsbA, PsbB, PsbC, PsbD, PsbE, PsbF, PsbH, PsbI, PsbJ, PsbK, PsbL, PsbM, PsbT, PsbX, PsbY, PsbZ, Psb30/Ycf12, at least 3 peripheral proteins of the oxygen-evolving complex and a large number of cofactors. It forms dimeric complexes.

It is found in the plastid. Its subcellular location is the chloroplast thylakoid membrane. Functionally, one of the components of the core complex of photosystem II (PSII). PSII is a light-driven water:plastoquinone oxidoreductase that uses light energy to abstract electrons from H(2)O, generating O(2) and a proton gradient subsequently used for ATP formation. It consists of a core antenna complex that captures photons, and an electron transfer chain that converts photonic excitation into a charge separation. This Hordeum jubatum (Foxtail barley) protein is Photosystem II reaction center protein J.